Here is a 354-residue protein sequence, read N- to C-terminus: MSKYWSNITKDIEPYVCGEQPKNKKIIKLNTNENPYPPSPKVLQAIKNAAKDDLRLYPDPNCDVLRKTIANYYNLSKEEVFIGNGSDEVLSLSFLTFFNPEETIVFSDISYSFYPVYANLYKLDYKLAKLREDFSIDIEDFKNARGGAVITNPNAPTGLYLSLDSIKQILEDNINKVVMVDEAYIDFGGESSVSLIKDYPNLLVIQTLSKSRSLAGMRIGFALGQKELIEGLNRIKNSFNSYTIDRISSLAAIEAIKDEEYFKECTLKVIKTRNWTINELGKIGFKIIPSKANFIFITHDTYEAEDIFIKLRDENVLVRYFNKDRISNYLRVSIGSKEEMEIFIDKIKKIINKL.

Position 210 is an N6-(pyridoxal phosphate)lysine (K210).

The protein belongs to the class-II pyridoxal-phosphate-dependent aminotransferase family. Histidinol-phosphate aminotransferase subfamily. As to quaternary structure, homodimer. It depends on pyridoxal 5'-phosphate as a cofactor.

It carries out the reaction L-histidinol phosphate + 2-oxoglutarate = 3-(imidazol-4-yl)-2-oxopropyl phosphate + L-glutamate. Its pathway is amino-acid biosynthesis; L-histidine biosynthesis; L-histidine from 5-phospho-alpha-D-ribose 1-diphosphate: step 7/9. This is Histidinol-phosphate aminotransferase from Clostridium botulinum (strain Langeland / NCTC 10281 / Type F).